Here is a 117-residue protein sequence, read N- to C-terminus: Large ribosomal subunit protein bL20 (117 aa).

The protein belongs to the bacterial ribosomal protein bL20 family.

Its function is as follows. Binds directly to 23S ribosomal RNA and is necessary for the in vitro assembly process of the 50S ribosomal subunit. It is not involved in the protein synthesizing functions of that subunit. The sequence is that of Large ribosomal subunit protein bL20 from Leptospira biflexa serovar Patoc (strain Patoc 1 / Ames).